Reading from the N-terminus, the 147-residue chain is uncharacterized protein (147 aa).

A Rhodanese domain is found at 50–140; the sequence is NQKKAIIVDT…WNSENLPTTF (91 aa).

This is an uncharacterized protein from Buchnera aphidicola subsp. Schizaphis graminum (strain Sg).